Consider the following 330-residue polypeptide: Phospholipase C (330 aa).

The N-terminal stretch at 1 to 34 (MVKKTKSNSLKKVATLALANLLLVGALTDNSAKA) is a signal peptide. Cysteine 155 and cysteine 191 are oxidised to a cystine.

It belongs to the neutral sphingomyelinase family. Monomer.

Its subcellular location is the secreted. It carries out the reaction a 1,2-diacyl-sn-glycero-3-phosphocholine + H2O = phosphocholine + a 1,2-diacyl-sn-glycerol + H(+). In terms of biological role, bacterial hemolysins are exotoxins that attack blood cell membranes and cause cell rupture. Beta-hemolysin is a phospholipase C with specific activity toward sphingomyelins. Has a high specificity for sphingomyelin, hydrolyzes lysophosphatidylcholine at a much lower rate, but has no activity towards phosphatidylcholine, phosphatidylethanolamine, or phosphatidylserine. The chain is Phospholipase C (hlb) from Staphylococcus aureus (strain NCTC 8325 / PS 47).